The chain runs to 1031 residues: Sister chromatid cohesion 1 protein 4 (1031 aa).

The interval 461–481 (TPDKEDPGTCNDDAGNNNITG) is disordered. A Nuclear localization signal motif is present at residues 545-552 (TKRLRSAP). Disordered stretches follow at residues 661 to 703 (VEEN…EELK), 742 to 772 (EKLD…ADPN), and 803 to 835 (ELPH…VGST). Composition is skewed to basic and acidic residues over residues 742–762 (EKLD…HDGE) and 803–825 (ELPH…RDDQ).

Belongs to the rad21 family. In terms of assembly, component of the cohesin complex. Expressed in tissues containing dividing cells such as seedlings, flower buds, flowers and inflorescence meristem tissue.

It localises to the nucleus. The protein localises to the chromosome. Its subcellular location is the centromere. In terms of biological role, involved in sister chromatid and centromere cohesion during mitosis. The sequence is that of Sister chromatid cohesion 1 protein 4 (SYN4) from Arabidopsis thaliana (Mouse-ear cress).